We begin with the raw amino-acid sequence, 1032 residues long: Serine/threonine-protein kinase ppk31 (1032 aa).

Residues 3-72 enclose the PAS domain; the sequence is NPEQLKRILS…KATDNLFRKS (70 aa). Residues 528-877 enclose the Protein kinase domain; that stretch reads FILLKEINRG…YQEIKKHPFF (350 aa). ATP-binding positions include 534 to 542 and lysine 557; that span reads INRGAYGRV. Aspartate 652 (proton acceptor) is an active-site residue. The disordered stretch occupies residues 938-963; the sequence is PKATPADSGTETSNSAAFSASEEETT. The segment covering 947-957 has biased composition (low complexity); that stretch reads TETSNSAAFSA.

This sequence belongs to the protein kinase superfamily. Ser/Thr protein kinase family.

It localises to the cytoplasm. The catalysed reaction is L-seryl-[protein] + ATP = O-phospho-L-seryl-[protein] + ADP + H(+). It catalyses the reaction L-threonyl-[protein] + ATP = O-phospho-L-threonyl-[protein] + ADP + H(+). Its function is as follows. Has a role in meiosis. This is Serine/threonine-protein kinase ppk31 (ppk31) from Schizosaccharomyces pombe (strain 972 / ATCC 24843) (Fission yeast).